The sequence spans 127 residues: Urotensin-2 (127 aa).

The first 16 residues, 1–16 (MSKLFFCCLILAGSFC), serve as a signal peptide directing secretion. Residues 17–111 (SFRSLPIIVP…RLQSKDRKQF (95 aa)) constitute a propeptide that is removed on maturation. Cys121 and Cys126 are disulfide-bonded.

This sequence belongs to the urotensin-2 family. As to expression, central nervous system. Spinal cord.

The protein localises to the secreted. Involved in smooth muscle stimulating and ion mobilizing activities. It has a suggested role as a corticotropin-releasing factor. This chain is Urotensin-2 (UTS2), found in Pelophylax ridibundus (Marsh frog).